The sequence spans 286 residues: CDP-diacylglycerol--serine O-phosphatidyltransferase (286 aa).

5 helical membrane passes run 15 to 35, 95 to 115, 135 to 155, 167 to 187, and 207 to 227; these read ILPSAMTVLSICAGLTAIKFA, MLSKWPVGWVVVLLYAVCVVL, EFFVGMPAPAGAVSMIGLLAL, VWFLSFWVTGTSILLVSGIPM, and LAICAAAAVLAPYLLIWVIII.

Belongs to the CDP-alcohol phosphatidyltransferase class-I family.

The protein localises to the cell membrane. It carries out the reaction a CDP-1,2-diacyl-sn-glycerol + L-serine = a 1,2-diacyl-sn-glycero-3-phospho-L-serine + CMP + H(+). The polypeptide is CDP-diacylglycerol--serine O-phosphatidyltransferase (pssA) (Mycobacterium bovis (strain ATCC BAA-935 / AF2122/97)).